A 335-amino-acid polypeptide reads, in one-letter code: N-acetylmuramoyl-L-alanine amidase sle1 (335 aa).

The first 25 residues, 1-25 (MQKKVIAAIIGTSAISAVAATQANA), serve as a signal peptide directing secretion. In terms of domain architecture, LysM 1 spans 27-70 (TTHTVKPGESVWAISNKYGISIAKLKSLNNLTSNLIFPNQVLKV). Residues 71–86 (SGSSNSTSNSSRPSTN) show a composition bias toward low complexity. The segment at 71 to 90 (SGSSNSTSNSSRPSTNSGGG) is disordered. LysM domains follow at residues 91–134 (SYYT…KLKV) and 158–201 (SYYT…KLKV). Residues 211–335 (ASATTTNRGY…YQVNNYRYIH (125 aa)) enclose the Peptidase C51 domain.

It localises to the secreted. It is found in the cell surface. It catalyses the reaction Hydrolyzes the link between N-acetylmuramoyl residues and L-amino acid residues in certain cell-wall glycopeptides.. Its function is as follows. Peptidoglycan hydrolase involved in the splitting of the septum during cell division. The chain is N-acetylmuramoyl-L-alanine amidase sle1 (sle1) from Staphylococcus aureus (strain bovine RF122 / ET3-1).